Reading from the N-terminus, the 119-residue chain is Large ribosomal subunit protein uL22 (119 aa).

It belongs to the universal ribosomal protein uL22 family. Part of the 50S ribosomal subunit.

This protein binds specifically to 23S rRNA; its binding is stimulated by other ribosomal proteins, e.g. L4, L17, and L20. It is important during the early stages of 50S assembly. It makes multiple contacts with different domains of the 23S rRNA in the assembled 50S subunit and ribosome. Functionally, the globular domain of the protein is located near the polypeptide exit tunnel on the outside of the subunit, while an extended beta-hairpin is found that lines the wall of the exit tunnel in the center of the 70S ribosome. The sequence is that of Large ribosomal subunit protein uL22 from Rickettsia conorii (strain ATCC VR-613 / Malish 7).